A 233-amino-acid polypeptide reads, in one-letter code: Synaptogyrin-4 (233 aa).

The 152-residue stretch at 18-169 folds into the MARVEL domain; sequence FLRRPKSISR…QAYLAFQDLR (152 aa). A run of 4 helical transmembrane segments spans residues 25 to 45, 66 to 86, 104 to 124, and 145 to 165; these read ISRI…LTDG, CSFA…FLAI, LLDF…FCFL, and AAIA…YLAF. The tract at residues 191–233 is disordered; that stretch reads SPSSTSPSNPPITGPNSLSYTSSALSPYMTTPKAPRLAMMPDS. Polar residues predominate over residues 204 to 219; sequence GPNSLSYTSSALSPYM.

It belongs to the synaptogyrin family.

It is found in the membrane. This is Synaptogyrin-4 (Syngr4) from Mus musculus (Mouse).